A 399-amino-acid polypeptide reads, in one-letter code: Unsaturated chondroitin disaccharide hydrolase (399 aa).

Residue aspartate 116 is the Nucleophile of the active site. The substrate site is built by aspartate 116, aspartate 176, glycine 234, threonine 236, arginine 248, tryptophan 252, serine 366, and serine 369. The active-site Proton donor is the aspartate 176.

Belongs to the glycosyl hydrolase 88 family. In terms of assembly, monomer.

It carries out the reaction beta-D-4-deoxy-Delta(4)-GlcpA-(1-&gt;3)-beta-D-GalpNAc6S + H2O = N-acetyl-beta-D-galactosamine 6-sulfate + 5-dehydro-4-deoxy-D-glucuronate. Catalyzes the hydrolysis of unsaturated hyaluronate and chondroitin disaccharides. Also degrades unsaturated heparin disaccharides. Releases 4-deoxy-4,5-didehydro D-glucuronic acid or 4-deoxy-4,5-didehydro L-iduronic acid from chondroitin disaccharides, hyaluronan disaccharides and heparin disaccharides and cleaves both glycosidic (1-&gt;3) and (1-&gt;4) bonds. Prefers sulfated glycosaminoglycans compared to unsulfated glycosaminoglycans. Probably required for mammalian cells invasion through the degradation of extracellular sulfated glycosaminoglycans such as chondroitin and hyaluronan. The protein is Unsaturated chondroitin disaccharide hydrolase (ugl) of Streptococcus pyogenes serotype M1.